Here is a 20-residue protein sequence, read N- to C-terminus: Collagenolytic protease 35 kDa 2 (20 aa).

The Peptidase S1 domain occupies 1–20 (IVGGTEVTPGEIPYQLSFQD). The tract at residues 1–20 (IVGGTEVTPGEIPYQLSFQD) is disordered.

Belongs to the peptidase S1 family.

The catalysed reaction is Hydrolysis of proteins, with broad specificity for peptide bonds. Native collagen is cleaved about 75% of the length of the molecule from the N-terminus. Low activity on small molecule substrates of both trypsin and chymotrypsin.. This enzyme is a serine protease capable of degrading the native triple helix of collagen. This Chionoecetes opilio (Atlantic snow crab) protein is Collagenolytic protease 35 kDa 2.